The chain runs to 462 residues: L-seryl-tRNA(Sec) selenium transferase (462 aa).

Lys-293 is modified (N6-(pyridoxal phosphate)lysine).

It belongs to the SelA family. Pyridoxal 5'-phosphate serves as cofactor.

Its subcellular location is the cytoplasm. It catalyses the reaction L-seryl-tRNA(Sec) + selenophosphate + H(+) = L-selenocysteinyl-tRNA(Sec) + phosphate. Its pathway is aminoacyl-tRNA biosynthesis; selenocysteinyl-tRNA(Sec) biosynthesis; selenocysteinyl-tRNA(Sec) from L-seryl-tRNA(Sec) (bacterial route): step 1/1. In terms of biological role, converts seryl-tRNA(Sec) to selenocysteinyl-tRNA(Sec) required for selenoprotein biosynthesis. The polypeptide is L-seryl-tRNA(Sec) selenium transferase (Clostridium botulinum (strain 657 / Type Ba4)).